The sequence spans 1155 residues: ATP-dependent helicase/deoxyribonuclease subunit B (1155 aa).

The UvrD-like helicase ATP-binding domain maps to 1–300 (MSLRFIVGRA…AHLEKYYFRH (300 aa)). 8-15 (GRAGSGKS) is a binding site for ATP. The region spanning 280–590 (TPVRFQKDSA…VVGTLERSRN (311 aa)) is the UvrD-like helicase C-terminal domain. Residues Cys792, Cys1111, Cys1114, and Cys1120 each contribute to the [4Fe-4S] cluster site.

It belongs to the helicase family. AddB/RexB type 1 subfamily. In terms of assembly, heterodimer of AddA and AddB. Requires Mg(2+) as cofactor. The cofactor is [4Fe-4S] cluster.

In terms of biological role, the heterodimer acts as both an ATP-dependent DNA helicase and an ATP-dependent, dual-direction single-stranded exonuclease. Recognizes the chi site generating a DNA molecule suitable for the initiation of homologous recombination. The AddB subunit has 5' -&gt; 3' nuclease activity but not helicase activity. The polypeptide is ATP-dependent helicase/deoxyribonuclease subunit B (Desulforamulus reducens (strain ATCC BAA-1160 / DSM 100696 / MI-1) (Desulfotomaculum reducens)).